The chain runs to 128 residues: CD59 glycoprotein (128 aa).

Residues 1–25 (MGIQGGSVLFGLLLILAVFCHSGHS) form the signal peptide. The 83-residue stretch at 26 to 108 (LQCYSCPYST…ILENGGTTLS (83 aa)) folds into the UPAR/Ly6 domain. 5 disulfide bridges follow: Cys28-Cys51, Cys31-Cys38, Cys44-Cys64, Cys70-Cys88, and Cys89-Cys94. Residue Asn43 is glycosylated (N-linked (GlcNAc...) asparagine). Residue Asn102 is the site of GPI-anchor amidated asparagine attachment. Residues 103-128 (GGTTLSKKTVLLLVTPFLAAAWSLHP) constitute a propeptide, removed in mature form.

Interacts with T-cell surface antigen CD2. Post-translationally, N- and O-glycosylated.

It localises to the cell membrane. Its subcellular location is the secreted. Its function is as follows. Potent inhibitor of the complement membrane attack complex (MAC) action, which protects self-cells from damage during complement activation. Acts by binding to the beta-haipins of C8 (C8A and C8B) components of the assembling MAC, forming an intermolecular beta-sheet that prevents incorporation of the multiple copies of C9 required for complete formation of the osmolytic pore. The protein is CD59 glycoprotein of Callithrix sp. (Marmoset).